The sequence spans 170 residues: CASP-like protein 1F1 (170 aa).

Residues 1–16 (MMGDNEGRRTPLLNLG) lie on the Cytoplasmic side of the membrane. The helical transmembrane segment at 17-37 (VQVSMRVLIIGAAMASMWVMI) threads the bilayer. Over 38–62 (TNREVASVYGIAFEAKYSYSSAFRY) the chain is Extracellular. Residues 63 to 83 (LVYAQIAVCAATLFTLVWACL) form a helical membrane-spanning segment. At 84–88 (AVRRR) the chain is on the cytoplasmic side. Residues 89 to 109 (GLVFALFFFDLLTTLTAISAF) traverse the membrane as a helical segment. Over 110 to 141 (SAAFAEGYVGKYGNKQAGWLPICGYVHVYCSR) the chain is Extracellular. Residues 142–162 (VTISLAMSFASFVLLFILTVL) traverse the membrane as a helical segment. The Cytoplasmic segment spans residues 163-170 (TASSARHY).

This sequence belongs to the Casparian strip membrane proteins (CASP) family. As to quaternary structure, homodimer and heterodimers.

Its subcellular location is the cell membrane. This is CASP-like protein 1F1 from Arabidopsis lyrata subsp. lyrata (Lyre-leaved rock-cress).